The sequence spans 420 residues: Glycogen synthase kinase-3 beta (420 aa).

A compositionally biased stretch (polar residues) spans M1–A22. The interval M1–E53 is disordered. S9 carries the post-translational modification Phosphoserine; by PKB/AKT1, RPS6KA3 and SGK3. C14 carries S-palmitoyl cysteine lipidation. The Protein kinase domain occupies Y56 to F340. ATP contacts are provided by residues I62–V70 and K85. The Proton acceptor role is filled by D181. Y216 carries the phosphotyrosine modification. Positions Q385–T420 are disordered. Composition is skewed to low complexity over residues A386–N401 and N409–T420. Phosphoserine is present on S389.

This sequence belongs to the protein kinase superfamily. CMGC Ser/Thr protein kinase family. GSK-3 subfamily. Monomer. Interacts with DAB2IP (via C2 domain); the interaction stimulates GSK3B kinase activation. Interacts (via C2 domain) with PPP2CA. Interacts with CABYR, MMP2, MUC1, NIN and PRUNE1. Interacts with AXIN1; the interaction mediates hyperphosphorylation of CTNNB1 leading to its ubiquitination and destruction. Interacts with and phosphorylates SNAI1. Interacts with DNM1L (via a C-terminal domain). Interacts with ARRB2. Interacts with DISC1. Found in a complex composed of MACF1, APC, AXIN1, CTNNB1 and GSK3B. Interacts with SGK3. Interacts with the CLOCK-BMAL1 heterodimer. Interacts with ZBED3. Interacts with the BMAL1. The complex composed, at least, of APC, CTNNB1 and GSK3B interacts with JPT1; the interaction requires the inactive form of GSK3B (phosphorylated at 'Ser-9'). Forms a complex composed of PRKAR2A or PRKAR2B, GSK3B and GSKIP through GSKIP interaction; facilitates PKA-induced phosphorylation and regulates GSK3B activity. Interacts with GSKIP. Interacts with GID8. Interacts with PIWIL2. Interacts with LMBR1L. Interacts with DDX3X. Interacts with BIRC2. Interacts with TNFRSF10B; TNFRSF10B stimulation inhibits GSK3B kinase activity. Found in a complex with SLC39A6, SLC39A10 and with GSK3B that controls NCAM1 phosphorylation. Interacts with PKP3 (via ARM repeats); the interaction may be involved in PKP3 protein degradation. Phosphorylated by AKT1 and ILK1. Upon insulin-mediated signaling, the activated PKB/AKT1 protein kinase phosphorylates and deactivates GSK3B, resulting in the dephosphorylation and activation of GYS1. Activated by phosphorylation at Tyr-216. Phosphorylation of Ser-9 in the hippocampus peaks at CT0, whereas in the liver it peaks at CT12. Inactivated by phosphorylation at Ser-9. Phosphorylated in a circadian manner in the hippocampus. Post-translationally, mono-ADP-ribosylation by PARP10 negatively regulates kinase activity. In terms of processing, palmitoylated. Palmitoylation by ZDHHC4 prevents AKT1-mediated phosphorylation. In terms of tissue distribution, expressed in the liver (at protein level).

It is found in the cytoplasm. The protein resides in the nucleus. It localises to the cell membrane. The enzyme catalyses L-seryl-[tau protein] + ATP = O-phospho-L-seryl-[tau protein] + ADP + H(+). The catalysed reaction is L-threonyl-[tau protein] + ATP = O-phospho-L-threonyl-[tau protein] + ADP + H(+). It catalyses the reaction L-seryl-[protein] + ATP = O-phospho-L-seryl-[protein] + ADP + H(+). It carries out the reaction L-threonyl-[protein] + ATP = O-phospho-L-threonyl-[protein] + ADP + H(+). Activated by phosphorylation at Tyr-216. In response to insulin, inhibited by phosphorylation at Ser-9 by PKB/AKT1 and RPS6KA3; phosphorylation at this site causes a conformational change, preventing access of substrates to the active site. Inhibited by IL22 treatment which also triggers phosphorylation at Ser-9, promoting inactivation. Inhibited by lithium. Constitutively active protein kinase that acts as a negative regulator in the hormonal control of glucose homeostasis, Wnt signaling and regulation of transcription factors and microtubules, by phosphorylating and inactivating glycogen synthase (GYS1 or GYS2), EIF2B, CTNNB1/beta-catenin, APC, AXIN1, DPYSL2/CRMP2, JUN, NFATC1/NFATC, MAPT/TAU and MACF1. Requires primed phosphorylation of the majority of its substrates. In skeletal muscle, contributes to insulin regulation of glycogen synthesis by phosphorylating and inhibiting GYS1 activity and hence glycogen synthesis. May also mediate the development of insulin resistance by regulating activation of transcription factors. Regulates protein synthesis by controlling the activity of initiation factor 2B (EIF2BE/EIF2B5) in the same manner as glycogen synthase. In Wnt signaling, GSK3B forms a multimeric complex with APC, AXIN1 and CTNNB1/beta-catenin and phosphorylates the N-terminus of CTNNB1 leading to its degradation mediated by ubiquitin/proteasomes. Phosphorylates JUN at sites proximal to its DNA-binding domain, thereby reducing its affinity for DNA. Phosphorylates NFATC1/NFATC on conserved serine residues promoting NFATC1/NFATC nuclear export, shutting off NFATC1/NFATC gene regulation, and thereby opposing the action of calcineurin. Phosphorylates MAPT/TAU on 'Thr-548', decreasing significantly MAPT/TAU ability to bind and stabilize microtubules. MAPT/TAU is the principal component of neurofibrillary tangles in Alzheimer disease. Plays an important role in ERBB2-dependent stabilization of microtubules at the cell cortex. Phosphorylates MACF1, inhibiting its binding to microtubules which is critical for its role in bulge stem cell migration and skin wound repair. Probably regulates NF-kappa-B (NFKB1) at the transcriptional level and is required for the NF-kappa-B-mediated anti-apoptotic response to TNF-alpha (TNF/TNFA). Negatively regulates replication in pancreatic beta-cells, resulting in apoptosis, loss of beta-cells and diabetes. Through phosphorylation of the anti-apoptotic protein MCL1, may control cell apoptosis in response to growth factors deprivation. Phosphorylates MUC1 in breast cancer cells, decreasing the interaction of MUC1 with CTNNB1/beta-catenin. Is necessary for the establishment of neuronal polarity and axon outgrowth. Phosphorylates MARK2, leading to inhibition of its activity. Phosphorylates SIK1 at 'Thr-182', leading to sustainment of its activity. Phosphorylates ZC3HAV1 which enhances its antiviral activity. Phosphorylates SNAI1, leading to its ubiquitination and proteasomal degradation. Phosphorylates SFPQ at 'Thr-687' upon T-cell activation. Phosphorylates NR1D1 st 'Ser-55' and 'Ser-59' and stabilizes it by protecting it from proteasomal degradation. Regulates the circadian clock via phosphorylation of the major clock components including BMAL1, CLOCK and PER2. Phosphorylates CLOCK AT 'Ser-427' and targets it for proteasomal degradation. Phosphorylates BMAL1 at 'Ser-17' and 'Ser-21' and primes it for ubiquitination and proteasomal degradation. Phosphorylates FBXL2 at 'Thr-404' and primes it for ubiquitination by the SCF(FBXO3) complex and proteasomal degradation. Phosphorylates OGT at 'Ser-3' or 'Ser-4' which positively regulates its activity. Phosphorylates MYCN in neuroblastoma cells which may promote its degradation. Regulates the circadian rhythmicity of hippocampal long-term potentiation and BMAL1 and PER2 expression. Acts as a regulator of autophagy by mediating phosphorylation of KAT5/TIP60 under starvation conditions, activating KAT5/TIP60 acetyltransferase activity and promoting acetylation of key autophagy regulators, such as ULK1 and RUBCNL/Pacer. Negatively regulates extrinsic apoptotic signaling pathway via death domain receptors. Promotes the formation of an anti-apoptotic complex, made of DDX3X, BRIC2 and GSK3B, at death receptors, including TNFRSF10B. The anti-apoptotic function is most effective with weak apoptotic signals and can be overcome by stronger stimulation. Phosphorylates E2F1, promoting the interaction between E2F1 and USP11, stabilizing E2F1 and promoting its activity. Phosphorylates mTORC2 complex component RICTOR at 'Ser-1235' in response to endoplasmic stress, inhibiting mTORC2. Phosphorylates FXR1, promoting FXR1 ubiquitination by the SCF(FBXO4) complex and FXR1 degradation by the proteasome. Phosphorylates interleukin-22 receptor subunit IL22RA1, preventing its proteasomal degradation. This Mus musculus (Mouse) protein is Glycogen synthase kinase-3 beta.